Consider the following 1384-residue polypeptide: Contactin-associated protein 1 (1384 aa).

A signal peptide spans 1–19; it reads MMHLRLFCILLAAVSGAEG. Residues 20–1283 lie on the Extracellular side of the membrane; sequence WGYYGCDEEL…PYYHDEGWVA (1264 aa). One can recognise an F5/8 type C domain in the interval 25-168; it reads CDEELVGPLY…IGLRLGLYGC (144 aa). An intrachain disulfide couples Cys25 to Cys168. Residues Asn120, Asn128, and Asn276 are each glycosylated (N-linked (GlcNAc...) asparagine). Laminin G-like domains are found at residues 203–355 and 389–538; these read FKTE…AFRC and FRTW…FDTC. The cysteines at positions 323 and 355 are disulfide-linked. Asn420, Asn499, and Asn518 each carry an N-linked (GlcNAc...) asparagine glycan. 4 disulfides stabilise this stretch: Cys506-Cys538, Cys544-Cys555, Cys549-Cys564, and Cys566-Cys576. Residues 540–577 form the EGF-like 1 domain; sequence ITDRCSPNMCEHDGRCYQSWDDFICYCELTGYKGETCH. Residues 576–795 enclose the Fibrinogen C-terminal domain; the sequence is CHTPLYKESC…NTISFHTGAA (220 aa). N-linked (GlcNAc...) asparagine glycosylation is found at Asn597, Asn653, Asn664, Asn763, Asn804, Asn843, Asn860, Asn948, and Asn956. Residues 813–956 form the Laminin G-like 3 domain; that stretch reads FRTSAPSGVF…ANASEGTSPN (144 aa). Disulfide bonds link Cys930/Cys957, Cys961/Cys974, Cys968/Cys983, and Cys985/Cys995. An EGF-like 2 domain is found at 957–996; it reads CTGHCAHPRLPCFHGGRCVERYSYYTCDCDLTAFDGPYCN. N-linked (GlcNAc...) asparagine glycosylation is found at Asn1078 and Asn1147. Residues 1088 to 1250 form the Laminin G-like 4 domain; it reads FSTSSAPAVL…VQGELSESNC (163 aa). Cys1209 and Cys1250 form a disulfide bridge. A helical transmembrane segment spans residues 1284-1304; sequence ILLGFLVAFLLLGLVGMLVLF. At 1305-1384 the chain is on the cytoplasmic side; that stretch reads YLQNHRYKGS…PQILEESRSE (80 aa). Positions 1319–1328 are enriched in basic and acidic residues; it reads EPKAAHEYHP. The interval 1319–1384 is disordered; sequence EPKAAHEYHP…PQILEESRSE (66 aa). Residues 1328–1369 carry the SH3-binding motif; the sequence is PGSKPPLPTSGPAQVPTPTAAPNQAPASAPAPAPTPAPAPGP. Residues 1339 to 1355 show a composition bias toward low complexity; the sequence is PAQVPTPTAAPNQAPAS. A compositionally biased stretch (pro residues) spans 1356 to 1368; the sequence is APAPAPTPAPAPG. Ser1383 carries the post-translational modification Phosphoserine.

It belongs to the neurexin family. Interacts with CNTN1/contactin in cis form. Predominantly expressed in brain. Weak expression detected in ovary, pancreas, colon, lung, heart, intestine and testis.

It is found in the membrane. Its subcellular location is the cell junction. The protein resides in the paranodal septate junction. Functionally, required, with CNTNAP2, for radial and longitudinal organization of myelinated axons. Plays a role in the formation of functional distinct domains critical for saltatory conduction of nerve impulses in myelinated nerve fibers. Demarcates the paranodal region of the axo-glial junction. In association with contactin involved in the signaling between axons and myelinating glial cells. The polypeptide is Contactin-associated protein 1 (CNTNAP1) (Homo sapiens (Human)).